The primary structure comprises 443 residues: Tubulin beta-2 chain (443 aa).

The short motif at 1 to 4 (MREI) is the MREI motif element. 8 residues coordinate GTP: glutamine 11, glutamate 69, serine 138, glycine 142, threonine 143, glycine 144, asparagine 204, and asparagine 226. Residue glutamate 69 coordinates Mg(2+). 5-glutamyl polyglutamate is present on glutamate 438.

It belongs to the tubulin family. Dimer of alpha and beta chains. A typical microtubule is a hollow water-filled tube with an outer diameter of 25 nm and an inner diameter of 15 nM. Alpha-beta heterodimers associate head-to-tail to form protofilaments running lengthwise along the microtubule wall with the beta-tubulin subunit facing the microtubule plus end conferring a structural polarity. Microtubules usually have 13 protofilaments but different protofilament numbers can be found in some organisms and specialized cells. Requires Mg(2+) as cofactor. In terms of processing, some glutamate residues at the C-terminus are polyglycylated, resulting in polyglycine chains on the gamma-carboxyl group. Glycylation is mainly limited to tubulin incorporated into axonemes (cilia and flagella) whereas glutamylation is prevalent in neuronal cells, centrioles, axonemes, and the mitotic spindle. Both modifications can coexist on the same protein on adjacent residues, and lowering polyglycylation levels increases polyglutamylation, and reciprocally. The precise function of polyglycylation is still unclear. Post-translationally, some glutamate residues at the C-terminus are polyglutamylated, resulting in polyglutamate chains on the gamma-carboxyl group. Polyglutamylation plays a key role in microtubule severing by spastin (SPAST). SPAST preferentially recognizes and acts on microtubules decorated with short polyglutamate tails: severing activity by SPAST increases as the number of glutamates per tubulin rises from one to eight, but decreases beyond this glutamylation threshold. Nervous system specific.

It is found in the cytoplasm. The protein resides in the cytoskeleton. In terms of biological role, tubulin is the major constituent of microtubules, a cylinder consisting of laterally associated linear protofilaments composed of alpha- and beta-tubulin heterodimers. Microtubules grow by the addition of GTP-tubulin dimers to the microtubule end, where a stabilizing cap forms. Below the cap, tubulin dimers are in GDP-bound state, owing to GTPase activity of alpha-tubulin. This chain is Tubulin beta-2 chain (tubb2), found in Xenopus laevis (African clawed frog).